Consider the following 462-residue polypeptide: Cell wall mannoprotein 1 (462 aa).

An N-terminal signal peptide occupies residues 1-18 (MKFLSSLVVLGLSAQALA). Serine 313 provides a ligand contact to hexadecanoate. Positions 346-429 (FAGTGPAPTT…SVPAAPTGGN (84 aa)) are disordered. Residues 347–366 (AGTGPAPTTSSTPEASTAPA) show a composition bias toward low complexity. The segment covering 399-420 (VWPTSTTASPDVQPTITSSGTS) has biased composition (polar residues).

Belongs to the cell wall mannoprotein 1 family. In terms of assembly, monomer. In terms of processing, mannoprotein, glycosylated.

It localises to the secreted. Its subcellular location is the cell wall. Functionally, constitutive protein of the cell wall. Binds fatty acids and may thus serve as a fatty acid transporter between P.marneffei and host cells during infection. Abundant antigen target of host humoral immune response. This chain is Cell wall mannoprotein 1, found in Talaromyces marneffei (Penicillium marneffei).